We begin with the raw amino-acid sequence, 444 residues long: Ribulose bisphosphate carboxylase large chain (444 aa).

K5 is subject to N6,N6,N6-trimethyllysine. Substrate-binding residues include N114 and T164. The active-site Proton acceptor is K166. Position 168 (K168) interacts with substrate. Positions 192, 194, and 195 each coordinate Mg(2+). K192 is subject to N6-carboxylysine. H285 serves as the catalytic Proton acceptor. Positions 286, 318, and 370 each coordinate substrate.

This sequence belongs to the RuBisCO large chain family. Type I subfamily. As to quaternary structure, heterohexadecamer of 8 large chains and 8 small chains; disulfide-linked. The disulfide link is formed within the large subunit homodimers. Mg(2+) serves as cofactor. The disulfide bond which can form in the large chain dimeric partners within the hexadecamer appears to be associated with oxidative stress and protein turnover.

It is found in the plastid. Its subcellular location is the chloroplast. It catalyses the reaction 2 (2R)-3-phosphoglycerate + 2 H(+) = D-ribulose 1,5-bisphosphate + CO2 + H2O. The catalysed reaction is D-ribulose 1,5-bisphosphate + O2 = 2-phosphoglycolate + (2R)-3-phosphoglycerate + 2 H(+). RuBisCO catalyzes two reactions: the carboxylation of D-ribulose 1,5-bisphosphate, the primary event in carbon dioxide fixation, as well as the oxidative fragmentation of the pentose substrate in the photorespiration process. Both reactions occur simultaneously and in competition at the same active site. The protein is Ribulose bisphosphate carboxylase large chain of Botrychium strictum (Fern).